The chain runs to 150 residues: Large ribosomal subunit protein bL9 (150 aa).

Belongs to the bacterial ribosomal protein bL9 family.

In terms of biological role, binds to the 23S rRNA. The chain is Large ribosomal subunit protein bL9 from Shewanella halifaxensis (strain HAW-EB4).